The following is an 85-amino-acid chain: UPF0297 protein CPR_1749 (85 aa).

Belongs to the UPF0297 family.

The chain is UPF0297 protein CPR_1749 from Clostridium perfringens (strain SM101 / Type A).